We begin with the raw amino-acid sequence, 802 residues long: Peptidyl serine alpha-galactosyltransferase (802 aa).

An N-terminal signal peptide occupies residues 1–19 (MRWDLITAIVAALVVSVLA). Topologically, residues 20–750 (DESGQMAPYR…SEGRFSTLKL (731 aa)) are extracellular. Residues asparagine 214, asparagine 275, asparagine 425, and asparagine 637 are each glycosylated (N-linked (GlcNAc...) asparagine). Positions 699-741 (RNCPEPGSESTEKISVSRKVGNIETKQTQGSDETKESSGSSES) are disordered. The chain crosses the membrane as a helical span at residues 751–771 (WVIALWLISGVGFLVVMLLVF). The Cytoplasmic segment spans residues 772–802 (STRRGRGTTRGKGYRNKRRTSYSNTGFLDTK). Over residues 777–791 (RGTTRGKGYRNKRRT) the composition is skewed to basic residues. A disordered region spans residues 777-802 (RGTTRGKGYRNKRRTSYSNTGFLDTK). Over residues 792 to 802 (SYSNTGFLDTK) the composition is skewed to polar residues.

It localises to the endoplasmic reticulum membrane. Glycosyltransferase involved in the O-galactosylation of several proteins including extensins. Catalyzes the transfer of alpha-galactosyl to Ser residues. Hydroxylation of proline residues adjacent to the serine acceptor is required for activity. This is Peptidyl serine alpha-galactosyltransferase from Arabidopsis thaliana (Mouse-ear cress).